We begin with the raw amino-acid sequence, 398 residues long: KTTAPSVYPLAPVCGDTTGSSVTLGCLVKGYFPEPVTLTWNSGSLSSGVHTFPAVLQSDLYTLSSSVTVTSSTWPSQSITCNVAHPASSTKVDKKIEPRGPTIKPCPPCKCPAPNLLGGPSVFIFPPKIKDVLMISLSPIVTCVVVDVSEDDPDVQISWFVNNVEVHTAQTQTHREDYNSTLRVVSALPIQHQDWMSGKEFKCKVNNKDLPAPIERTISKPKGSVRAPQVYVLPPPEEEMTKKQVTLTCMVTDFMPEDIYVEWTNNGKTELNYKNTEPVLDSDGSYFMYSKLRVEKKNWVERNSYSCSVVHEGLHNHHTTKSFSRTPGLDLDDVCAEAQDGELDGLWTTITIFISLFLLSVCYSASVTLFKVKWIFSSVVELKQTISPDYRNMIGQGA.

3 Ig-like domains span residues 5 to 97 (PSVY…KKIE), 120 to 219 (PSVF…RTIS), and 228 to 324 (PQVY…KSFS). Disulfide bonds link C26/C81, C143/C203, and C249/C307. N179 is a glycosylation site (N-linked (GlcNAc...) asparagine). A helical transmembrane segment spans residues 345 to 362 (GLWTTITIFISLFLLSVC). Residues 363–398 (YSASVTLFKVKWIFSSVVELKQTISPDYRNMIGQGA) lie on the Cytoplasmic side of the membrane.

Its subcellular location is the cell membrane. The sequence is that of Immunoglobulin heavy constant gamma 2A from Mus musculus (Mouse).